The sequence spans 162 residues: Cyclic pyranopterin monophosphate synthase (162 aa).

Substrate contacts are provided by residues 79-81 (LCH) and 117-118 (ME). Asp132 is an active-site residue.

It belongs to the MoaC family. In terms of assembly, homohexamer; trimer of dimers.

The enzyme catalyses (8S)-3',8-cyclo-7,8-dihydroguanosine 5'-triphosphate = cyclic pyranopterin phosphate + diphosphate. Its pathway is cofactor biosynthesis; molybdopterin biosynthesis. In terms of biological role, catalyzes the conversion of (8S)-3',8-cyclo-7,8-dihydroguanosine 5'-triphosphate to cyclic pyranopterin monophosphate (cPMP). This chain is Cyclic pyranopterin monophosphate synthase, found in Bordetella petrii (strain ATCC BAA-461 / DSM 12804 / CCUG 43448).